Here is a 27-residue protein sequence, read N- to C-terminus: Putative phosphoglycerate kinase (27 aa).

It belongs to the phosphoglycerate kinase family. As to quaternary structure, monomer. Mg(2+) serves as cofactor.

The catalysed reaction is (2R)-3-phosphoglycerate + ATP = (2R)-3-phospho-glyceroyl phosphate + ADP. The chain is Putative phosphoglycerate kinase from Pinus strobus (Eastern white pine).